The primary structure comprises 790 residues: Phenylalanine--tRNA ligase beta subunit (790 aa).

The tRNA-binding domain maps to 39-147 (AKPFSGIVVG…ADAPVGVDVR (109 aa)). One can recognise a B5 domain in the interval 400–476 (PAKALVNLRH…RLYGYNKLPV (77 aa)). The Mg(2+) site is built by Asp-454, Asp-460, Glu-463, and Glu-464. One can recognise an FDX-ACB domain in the interval 696 to 789 (SRFPEIRRDL…LGNRFGASLR (94 aa)).

It belongs to the phenylalanyl-tRNA synthetase beta subunit family. Type 1 subfamily. Tetramer of two alpha and two beta subunits. Mg(2+) is required as a cofactor.

It localises to the cytoplasm. The enzyme catalyses tRNA(Phe) + L-phenylalanine + ATP = L-phenylalanyl-tRNA(Phe) + AMP + diphosphate + H(+). The polypeptide is Phenylalanine--tRNA ligase beta subunit (Hahella chejuensis (strain KCTC 2396)).